A 462-amino-acid polypeptide reads, in one-letter code: Tubulin alpha-4 chain (462 aa).

Residues Gln11, Glu82, Ser151, Gly155, Thr156, Thr190, Asn217, and Asn239 each coordinate GTP. Glu82 is a Mg(2+) binding site. The active site involves Glu265.

Belongs to the tubulin family. Dimer of alpha and beta chains. A typical microtubule is a hollow water-filled tube with an outer diameter of 25 nm and an inner diameter of 15 nM. Alpha-beta heterodimers associate head-to-tail to form protofilaments running lengthwise along the microtubule wall with the beta-tubulin subunit facing the microtubule plus end conferring a structural polarity. Microtubules usually have 13 protofilaments but different protofilament numbers can be found in some organisms and specialized cells. Mg(2+) is required as a cofactor.

It localises to the cytoplasm. It is found in the cytoskeleton. The enzyme catalyses GTP + H2O = GDP + phosphate + H(+). In terms of biological role, tubulin is the major constituent of microtubules, a cylinder consisting of laterally associated linear protofilaments composed of alpha- and beta-tubulin heterodimers. Microtubules grow by the addition of GTP-tubulin dimers to the microtubule end, where a stabilizing cap forms. Below the cap, tubulin dimers are in GDP-bound state, owing to GTPase activity of alpha-tubulin. The chain is Tubulin alpha-4 chain (alphaTub67C) from Drosophila melanogaster (Fruit fly).